Reading from the N-terminus, the 435-residue chain is Tol-Pal system protein TolB (435 aa).

Residues 1–26 (MKIFSPIRLVLAIAALMSVFSAPAFA) form the signal peptide.

This sequence belongs to the TolB family. As to quaternary structure, the Tol-Pal system is composed of five core proteins: the inner membrane proteins TolA, TolQ and TolR, the periplasmic protein TolB and the outer membrane protein Pal. They form a network linking the inner and outer membranes and the peptidoglycan layer.

It is found in the periplasm. Its function is as follows. Part of the Tol-Pal system, which plays a role in outer membrane invagination during cell division and is important for maintaining outer membrane integrity. The chain is Tol-Pal system protein TolB from Agrobacterium fabrum (strain C58 / ATCC 33970) (Agrobacterium tumefaciens (strain C58)).